A 299-amino-acid polypeptide reads, in one-letter code: MHCGPPDMVCETKIVATEDHEALPGAKKDALLVAAGAMWPPLPAAPGPAAAPPPAAGPQPHGGTGGAGPPEGRGVCIREFRAAEQEAARRIFYDGILERIPNTAFRGLRQHPRTQLLYALLAALCFAVTRSLLLTCLVPAGLLALRYYYSRKVILAYLECALHTDMADIEQYYMKPPGSCFWVAVLDGNVVGIVAARAHEEDNTVELLRMSVDSRFRGKSIAKALGRRVLEFAMLHNYSAVVLGTTAVKVAAHKLYESLGFRHMGASDHYVLPGMTLSLAERLFFQVRYHRYRLQLREE.

Positions 44-57 (AAPGPAAAPPPAAG) are enriched in pro residues. The tract at residues 44–70 (AAPGPAAAPPPAAGPQPHGGTGGAGPP) is disordered. Gly residues predominate over residues 60 to 70 (PHGGTGGAGPP). A helical transmembrane segment spans residues 118–138 (YALLAALCFAVTRSLLLTCLV). One can recognise an N-acetyltransferase domain in the interval 143–280 (LALRYYYSRK…VLPGMTLSLA (138 aa)).

The protein belongs to the NAT8 family. As to expression, expressed in brain, kidney, liver and spleen. In brain, present in neurons but not in astrocytes (at protein level). Expressed in brain, thymus and spleen.

It is found in the cytoplasm. The protein resides in the microsome membrane. Its subcellular location is the mitochondrion membrane. It localises to the endoplasmic reticulum membrane. It catalyses the reaction L-aspartate + acetyl-CoA = N-acetyl-L-aspartate + CoA + H(+). Its activity is regulated as follows. Aminooxyacetic acid (AOAA) blocks its activity in both cytoplasm and mitochondria. Catalyzes the synthesis of N-acetylaspartate acid (NAA) from L-aspartate and acetyl-CoA. Promotes dopamine uptake by regulating TNF-alpha expression. Attenuates methamphetamine-induced inhibition of dopamine uptake. This is N-acetylaspartate synthetase (Nat8l) from Mus musculus (Mouse).